A 548-amino-acid chain; its full sequence is Cleavage and polyadenylation specificity factor subunit 6 (548 aa).

In terms of domain architecture, RRM spans 81-161 (IALYIGNLTW…QKPIVTPCNK (81 aa)). Positions 169–180 (MQSRKTATQAGQ) are enriched in polar residues. Disordered regions lie at residues 169-401 (MQSR…MDVV) and 473-548 (LHGI…YRHR). 3 stretches are compositionally biased toward pro residues: residues 221–279 (PAGP…PPVM), 294–362 (PPGP…PPPG), and 373–384 (GPPPSDPYGRPP). Composition is skewed to basic and acidic residues over residues 385 to 400 (PYERGDYGPPGRDMDV) and 490 to 500 (RSRERDHSRSR). Residues 501–511 (EKSRRHKSRSR) are compositionally biased toward basic residues. Basic and acidic residues predominate over residues 512 to 548 (DRHDDYYRERSRERERHRDRERDRDRERDREREYRHR).

It belongs to the RRM CPSF6/7 family. Component of the cleavage factor Im (CFIm) complex.

The protein resides in the nucleus. It localises to the nucleoplasm. The protein localises to the nucleus speckle. Its subcellular location is the cytoplasm. Its function is as follows. Component of the cleavage factor Im (CFIm) complex that functions as an activator of the pre-mRNA 3'-end cleavage and polyadenylation processing required for the maturation of pre-mRNA into functional mRNAs. CFIm contributes to the recruitment of multiprotein complexes on specific sequences on the pre-mRNA 3'-end, so called cleavage and polyadenylation signals (pA signals). Most pre-mRNAs contain multiple pA signals, resulting in alternative cleavage and polyadenylation (APA) producing mRNAs with variable 3'-end formation. The CFIm complex acts as a key regulator of cleavage and polyadenylation site choice during APA through its binding to 5'-UGUA-3' elements localized in the 3'-untranslated region (UTR) for a huge number of pre-mRNAs. Plays a role in mRNA export. The protein is Cleavage and polyadenylation specificity factor subunit 6 of Xenopus laevis (African clawed frog).